The sequence spans 287 residues: Pyridoxal kinase PdxY (287 aa).

Substrate-binding positions include Ser-9 and 44–45 (MQ). ATP-binding residues include Asp-111, Ala-142, Glu-147, and Lys-180. Asp-221 contributes to the substrate binding site.

The protein belongs to the pyridoxine kinase family. PdxY subfamily. Homodimer. It depends on Mg(2+) as a cofactor.

It catalyses the reaction pyridoxal + ATP = pyridoxal 5'-phosphate + ADP + H(+). Its pathway is cofactor metabolism; pyridoxal 5'-phosphate salvage; pyridoxal 5'-phosphate from pyridoxal: step 1/1. Its function is as follows. Pyridoxal kinase involved in the salvage pathway of pyridoxal 5'-phosphate (PLP). Catalyzes the phosphorylation of pyridoxal to PLP. This chain is Pyridoxal kinase PdxY, found in Burkholderia thailandensis (strain ATCC 700388 / DSM 13276 / CCUG 48851 / CIP 106301 / E264).